The sequence spans 122 residues: Prefoldin subunit 1 (122 aa).

At A2 the chain carries N-acetylalanine.

It belongs to the prefoldin subunit beta family. Heterohexamer of two PFD-alpha type and four PFD-beta type subunits.

Binds specifically to cytosolic chaperonin (c-CPN) and transfers target proteins to it. Binds to nascent polypeptide chain and promotes folding in an environment in which there are many competing pathways for nonnative proteins. This Bos taurus (Bovine) protein is Prefoldin subunit 1 (PFDN1).